We begin with the raw amino-acid sequence, 203 residues long: Small ribosomal subunit protein uS4 (203 aa).

The S4 RNA-binding domain occupies 93–156 (TRLDNLVFRL…QNLAIVNEAI (64 aa)).

The protein belongs to the universal ribosomal protein uS4 family. As to quaternary structure, part of the 30S ribosomal subunit. Contacts protein S5. The interaction surface between S4 and S5 is involved in control of translational fidelity.

Its function is as follows. One of the primary rRNA binding proteins, it binds directly to 16S rRNA where it nucleates assembly of the body of the 30S subunit. With S5 and S12 plays an important role in translational accuracy. This chain is Small ribosomal subunit protein uS4, found in Lacticaseibacillus casei (strain BL23) (Lactobacillus casei).